The following is a 238-amino-acid chain: Complement C1q-like protein 4 (238 aa).

An N-terminal signal peptide occupies residues 1–15 (MVLLLLVAIPLLVHS). The interval 36–101 (GPRGPGPDGA…PPGPGPGGVA (66 aa)) is disordered. Residues 53 to 96 (PPGAKGEVGRRGKAGLRGPPGPPGPRGPPGEPGRPGPPGPPGPG) enclose the Collagen-like domain. The span at 71–96 (PPGPPGPRGPPGEPGRPGPPGPPGPG) shows a compositional bias: pro residues. A C1q domain is found at 105 to 238 (GYVPRIAFYA…TFSGFIIYPD (134 aa)).

Forms homooligomers, predominantly dimers or trimers. Forms heterooligomers with C1QL1, C1QL2 and C1QL3, when proteins are coexpressed; this interaction does not occur after secretion. Interacts with ADGRB3. As to expression, highest expression levels in testis and adipose tissue, lower levels in skeletal muscle and kidney.

It is found in the secreted. In terms of biological role, may regulate the number of excitatory synapses that are formed on hippocampus neurons. Has no effect on inhibitory synapses. May inhibit adipocyte differentiation at an early stage of the process. The sequence is that of Complement C1q-like protein 4 (C1QL4) from Homo sapiens (Human).